Reading from the N-terminus, the 415-residue chain is Branched-chain-amino-acid aminotransferase 5, chloroplastic (415 aa).

A chloroplast-targeting transit peptide spans 1–65 (MERSAVASGF…IVSEVSRNRR (65 aa)). Lysine 261 is subject to N6-(pyridoxal phosphate)lysine.

It belongs to the class-IV pyridoxal-phosphate-dependent aminotransferase family. It depends on pyridoxal 5'-phosphate as a cofactor.

It localises to the plastid. The protein localises to the chloroplast. The catalysed reaction is L-leucine + 2-oxoglutarate = 4-methyl-2-oxopentanoate + L-glutamate. It carries out the reaction L-isoleucine + 2-oxoglutarate = (S)-3-methyl-2-oxopentanoate + L-glutamate. The enzyme catalyses L-valine + 2-oxoglutarate = 3-methyl-2-oxobutanoate + L-glutamate. The protein operates within amino-acid biosynthesis; L-isoleucine biosynthesis; L-isoleucine from 2-oxobutanoate: step 4/4. It participates in amino-acid biosynthesis; L-leucine biosynthesis; L-leucine from 3-methyl-2-oxobutanoate: step 4/4. Its pathway is amino-acid biosynthesis; L-valine biosynthesis; L-valine from pyruvate: step 4/4. Functionally, converts 2-oxo acids to branched-chain amino acids. Acts on leucine, isoleucine and valine. This chain is Branched-chain-amino-acid aminotransferase 5, chloroplastic (BCAT5), found in Arabidopsis thaliana (Mouse-ear cress).